Consider the following 243-residue polypeptide: Segregation and condensation protein A (243 aa).

This sequence belongs to the ScpA family. In terms of assembly, component of a cohesin-like complex composed of ScpA, ScpB and the Smc homodimer, in which ScpA and ScpB bind to the head domain of Smc. The presence of the three proteins is required for the association of the complex with DNA.

The protein localises to the cytoplasm. Participates in chromosomal partition during cell division. May act via the formation of a condensin-like complex containing Smc and ScpB that pull DNA away from mid-cell into both cell halves. In Halothermothrix orenii (strain H 168 / OCM 544 / DSM 9562), this protein is Segregation and condensation protein A.